Consider the following 267-residue polypeptide: Membrane-spanning 4-domains subfamily A member 10 (267 aa).

Over 1 to 61 the chain is Cytoplasmic; that stretch reads MKAEATVIPS…KKSSLLKELG (61 aa). Residues 62-82 form a helical membrane-spanning segment; that stretch reads AFHITIALLHLVFGGYLASIV. Residues 83-91 are Extracellular-facing; that stretch reads KNLHLVVLK. Residues 92–112 form a helical membrane-spanning segment; that stretch reads SWYPFWGAASFLISGILAITM. The Cytoplasmic portion of the chain corresponds to 113-121; that stretch reads KTFSKTYLK. The chain crosses the membrane as a helical span at residues 122–142; the sequence is MLCLMTNLISLFCVLSGLFVI. Over 143–171 the chain is Extracellular; it reads SKDLFLESPFESPIWRMYPNSTVHIQRLE. Residues 172–192 traverse the membrane as a helical segment; that stretch reads LALLCFTVLELFLPVPTAVTA. At 193–267 the chain is on the cytoplasmic side; sequence WRGDCPSAKN…GAAIWTQTAN (75 aa).

The protein belongs to the MS4A family.

The protein localises to the membrane. Functionally, may be involved in signal transduction as a component of a multimeric receptor complex. The polypeptide is Membrane-spanning 4-domains subfamily A member 10 (MS4A10) (Homo sapiens (Human)).